Consider the following 642-residue polypeptide: 1,4-alpha-glucan branching enzyme GlgB (642 aa).

Residue Asp-304 is the Nucleophile of the active site. Glu-355 (proton donor) is an active-site residue.

This sequence belongs to the glycosyl hydrolase 13 family. GlgB subfamily. As to quaternary structure, monomer.

The enzyme catalyses Transfers a segment of a (1-&gt;4)-alpha-D-glucan chain to a primary hydroxy group in a similar glucan chain.. It functions in the pathway glycan biosynthesis; glycogen biosynthesis. Functionally, catalyzes the formation of the alpha-1,6-glucosidic linkages in glycogen by scission of a 1,4-alpha-linked oligosaccharide from growing alpha-1,4-glucan chains and the subsequent attachment of the oligosaccharide to the alpha-1,6 position. The polypeptide is 1,4-alpha-glucan branching enzyme GlgB (Streptococcus pneumoniae serotype 4 (strain ATCC BAA-334 / TIGR4)).